A 791-amino-acid chain; its full sequence is Transient receptor potential cation channel subfamily V member 3 (791 aa).

3 disordered regions span residues 1-37 (MNAH…LTPT), 52-71 (PNPT…MDSN), and 76-113 (LSGN…EEQR). The Cytoplasmic segment spans residues 1-430 (MNAHSKEMAP…TLEPLHTLLH (430 aa)). A compositionally biased stretch (polar residues) spans 95 to 105 (ETPSNPNSPSA). 7 ANK repeats span residues 117 to 148 (KRLK…LCRR), 170 to 198 (TCLM…EEND), 214 to 243 (EGQT…DVNA), 261 to 291 (FGET…DITS), 298 to 330 (NILH…RSGN), 340 to 362 (DGLT…YILS), and 398 to 420 (TTDN…HEML). The chain crosses the membrane as a helical span at residues 431–460 (TKWKKFAKYMFFLSFCFYFFYNITLTLVSY). At 461 to 479 (YRPREDEDLPHPLALTHKM) the chain is on the extracellular side. The chain crosses the membrane as a helical span at residues 480 to 508 (SWLQLLGRMFVLIWATCISVKEGIAIFLL). Residues 509–519 (RPSDLQSILSD) are Cytoplasmic-facing. Residues 520–540 (AWFHFVFFVQAVLVILSVFLY) form a helical membrane-spanning segment. Residues 541–545 (LFAYK) are Extracellular-facing. A helical membrane pass occupies residues 546–566 (EYLACLVLAMALGWANMLYYT). Residues 567–569 (RGF) are Cytoplasmic-facing. The helical transmembrane segment at 570 to 608 (QSMGMYSVMIQKVILHDVLKFLFVYILFLLGFGVALASL) threads the bilayer. Residues 609 to 620 (IEKCSKDKKDCS) are Extracellular-facing. An intramembrane region (pore-forming) is located at residues 621-646 (SYGSFSDAVLELFKLTIGLGDLNIQQ). Gly-638 is a Na(+) binding site. Over 647-649 (NST) the chain is Extracellular. A helical membrane pass occupies residues 650–686 (YPILFLFLLITYVILTFVLLLNMLIALMGETVENVSK). Residues 687 to 791 (ESERIWRLQR…ELDEFPETSV (105 aa)) are Cytoplasmic-facing.

It belongs to the transient receptor (TC 1.A.4) family. TrpV subfamily. TRPV3 sub-subfamily. As to quaternary structure, homotetramer. May convert from a homotetramer to a homopentamer to allow pore dilation. Interacts with TRPV1; may form a heteromeric channel with TRPV1. Interacts with SNX11; this interaction promotes TRPV3 trafficking from the cell membrane to lysosome for degradation. Expressed in keratinocytes and hair follicles.

It localises to the cell membrane. It is found in the cytoplasm. Its subcellular location is the lysosome. It catalyses the reaction Ca(2+)(in) = Ca(2+)(out). The enzyme catalyses Mg(2+)(in) = Mg(2+)(out). The catalysed reaction is Na(+)(in) = Na(+)(out). It carries out the reaction K(+)(in) = K(+)(out). With respect to regulation, activated by cannabinoid that binds to the vanilloid binding pocket. Diphenylboronic anhydride induces pore dilation and enhances cation permeability by promoting the conversion to a homopentamer. Its function is as follows. Non-selective calcium permeant cation channel. It is activated by innocuous (warm) temperatures and shows an increased response at noxious temperatures greater than 39 degrees Celsius. Activation exhibits an outward rectification. The channel pore can dilate to provide permeability to larger cations. May associate with TRPV1 and may modulate its activity. Is a negative regulator of hair growth and cycling: TRPV3-coupled signaling suppresses keratinocyte proliferation in hair follicles and induces apoptosis and premature hair follicle regression (catagen). In Mus musculus (Mouse), this protein is Transient receptor potential cation channel subfamily V member 3 (Trpv3).